The chain runs to 226 residues: Thioredoxin domain-containing protein 9 (226 aa).

Residues 75–180 (EIGSERDFFQ…TTETLEWRLG (106 aa)) form the Thioredoxin domain. A phosphoserine mark is found at Ser188, Ser221, and Ser223.

As to quaternary structure, forms ternary complexes with the chaperonin TCP1 complex, spanning the cylindrical chaperonin cavity and contacting at least 2 subunits.

It localises to the cytoplasm. The protein resides in the nucleus. The protein localises to the cytoskeleton. It is found in the microtubule organizing center. Its subcellular location is the centrosome. It localises to the midbody. Its function is as follows. Significantly diminishes the chaperonin TCP1 complex ATPase activity, thus negatively impacts protein folding, including that of actin or tubulin. This Rattus norvegicus (Rat) protein is Thioredoxin domain-containing protein 9 (Txndc9).